The following is a 331-amino-acid chain: 4-hydroxy-3-methylbut-2-enyl diphosphate reductase (331 aa).

Cysteine 12 contacts [4Fe-4S] cluster. 2 residues coordinate (2E)-4-hydroxy-3-methylbut-2-enyl diphosphate: histidine 43 and histidine 81. 2 residues coordinate dimethylallyl diphosphate: histidine 43 and histidine 81. Residues histidine 43 and histidine 81 each coordinate isopentenyl diphosphate. Cysteine 103 serves as a coordination point for [4Fe-4S] cluster. Histidine 131 serves as a coordination point for (2E)-4-hydroxy-3-methylbut-2-enyl diphosphate. Residue histidine 131 coordinates dimethylallyl diphosphate. An isopentenyl diphosphate-binding site is contributed by histidine 131. Glutamate 133 functions as the Proton donor in the catalytic mechanism. (2E)-4-hydroxy-3-methylbut-2-enyl diphosphate is bound at residue threonine 170. A [4Fe-4S] cluster-binding site is contributed by cysteine 198. 3 residues coordinate (2E)-4-hydroxy-3-methylbut-2-enyl diphosphate: serine 226, asparagine 228, and serine 271. Residues serine 226, asparagine 228, and serine 271 each coordinate dimethylallyl diphosphate. Residues serine 226, asparagine 228, and serine 271 each coordinate isopentenyl diphosphate.

This sequence belongs to the IspH family. Requires [4Fe-4S] cluster as cofactor.

It carries out the reaction isopentenyl diphosphate + 2 oxidized [2Fe-2S]-[ferredoxin] + H2O = (2E)-4-hydroxy-3-methylbut-2-enyl diphosphate + 2 reduced [2Fe-2S]-[ferredoxin] + 2 H(+). It catalyses the reaction dimethylallyl diphosphate + 2 oxidized [2Fe-2S]-[ferredoxin] + H2O = (2E)-4-hydroxy-3-methylbut-2-enyl diphosphate + 2 reduced [2Fe-2S]-[ferredoxin] + 2 H(+). The protein operates within isoprenoid biosynthesis; dimethylallyl diphosphate biosynthesis; dimethylallyl diphosphate from (2E)-4-hydroxy-3-methylbutenyl diphosphate: step 1/1. It participates in isoprenoid biosynthesis; isopentenyl diphosphate biosynthesis via DXP pathway; isopentenyl diphosphate from 1-deoxy-D-xylulose 5-phosphate: step 6/6. Functionally, catalyzes the conversion of 1-hydroxy-2-methyl-2-(E)-butenyl 4-diphosphate (HMBPP) into a mixture of isopentenyl diphosphate (IPP) and dimethylallyl diphosphate (DMAPP). Acts in the terminal step of the DOXP/MEP pathway for isoprenoid precursor biosynthesis. The chain is 4-hydroxy-3-methylbut-2-enyl diphosphate reductase from Listeria monocytogenes serovar 1/2a (strain ATCC BAA-679 / EGD-e).